Consider the following 1323-residue polypeptide: ABC transporter gloK (1323 aa).

The next 7 helical transmembrane spans lie at 6–26, 102–122, 138–158, 217–237, 240–260, 325–345, and 359–379; these read AIAS…TLEA, PHAL…AGIL, VAYG…VMST, IWAS…RLGV, VAAV…VFGF, LLVG…VFAF, and PLLA…GQAV. One can recognise an ABC transmembrane type-1 1 domain in the interval 142 to 380; that stretch reads LIAAYAIVYI…IFSLLGQAVS (239 aa). In terms of domain architecture, ABC transporter 1 spans 471-697; that stretch reads IRDCSACWSK…SSYLESLGTR (227 aa). 503–510 lines the ATP pocket; the sequence is GPIGSGKS. A run of 7 helical transmembrane segments spans residues 748–768, 795–815, 821–841, 859–879, 891–910, 976–996, and 1006–1026; these read GWVT…GLVF, YALW…WLMI, AAIQ…LVYF, LIDM…LSCI, YVAA…QLFY, LNLT…SIAL, and IGVA…LVYT. In terms of domain architecture, ABC transmembrane type-1 2 spans 752 to 1031; it reads WWVFVLLCSG…TLVYTWTSLE (280 aa). An ABC transporter 2 domain is found at 1069 to 1300; that stretch reads IRFQSVSAAY…PSFFASLLKA (232 aa). 1103–1110 is an ATP binding site; the sequence is GRTGSGKS.

Belongs to the ABC transporter superfamily. ABCC family. Conjugate transporter (TC 3.A.1.208) subfamily.

Its subcellular location is the cell membrane. Its function is as follows. 3-isopropylmalate dehydratase large subunit; part of the gene cluster that mediates the biosynthesis of pneumocandins, lipohexapeptides of the echinocandin family that prevent fungal cell wall formation by non-competitive inhibition of beta-1,3-glucan synthase. Possibly secretes antifungal pneumocandins, thus avoiding of intracellular accumulation and ameliorating the toxicity to the producing cells. The protein is ABC transporter gloK of Glarea lozoyensis (strain ATCC 20868 / MF5171).